Consider the following 518-residue polypeptide: Prosaposin (518 aa).

A signal peptide spans 1–17; the sequence is MARRLLTLLGLLAAAVA. Positions 18–60 are excised as a propeptide; it reads SPVLWQKDCAKGPEVWCQSLRTASQCGAVKHCQQNVWSKPAVN. The Saposin A-type 1 domain occupies 19–59; sequence PVLWQKDCAKGPEVWCQSLRTASQCGAVKHCQQNVWSKPAV. 4 Saposin B-type domains span residues 60 to 143, 193 to 277, 307 to 388, and 399 to 480; these read NSIP…QSLQ, TEDV…PSVK, TFSV…AANK, and AGGF…GAAK. Disulfide bonds link cysteine 64-cysteine 139, cysteine 67-cysteine 133, and cysteine 95-cysteine 107. Residue asparagine 81 is glycosylated (N-linked (GlcNAc...) asparagine). Positions 144–193 are excised as a propeptide; it reads KHLAAMKLQKQLQSNKIPELDFSELTSPFMANVPLLLYPQDKPKQKSKAT. 3 disulfide bridges follow: cysteine 197–cysteine 273, cysteine 200–cysteine 267, and cysteine 229–cysteine 240. Asparagine 214 carries N-linked (GlcNAc...) asparagine glycosylation. Residues 277–306 constitute a propeptide that is removed on maturation; that stretch reads KSVPLQTLVPAQVVHEVKMETVEKATVQEK. Cystine bridges form between cysteine 311–cysteine 384, cysteine 314–cysteine 378, and cysteine 342–cysteine 353. Residue asparagine 328 is glycosylated (N-linked (GlcNAc...) asparagine). Positions 388 to 398 are excised as a propeptide; sequence KPPQQPVVVKP. 3 disulfide bridges follow: cysteine 403-cysteine 476, cysteine 406-cysteine 470, and cysteine 434-cysteine 445. Residue asparagine 420 is glycosylated (N-linked (GlcNAc...) asparagine). A propeptide spanning residues 480 to 518 is cleaved from the precursor; that stretch reads KKPLLGEDACVWGPGYWCKNMETAAQCNAVDHCRRHVWN. The Saposin A-type 2 domain maps to 482 to 518; the sequence is PLLGEDACVWGPGYWCKNMETAAQCNAVDHCRRHVWN.

Saposin-B is a homodimer. This precursor is proteolytically processed to 4 small peptides, which are similar to each other and are sphingolipid hydrolase activator proteins.

Its subcellular location is the lysosome. It localises to the secreted. Functionally, the lysosomal degradation of sphingolipids takes place by the sequential action of specific hydrolases. Some of these enzymes require specific low-molecular mass, non-enzymatic proteins: the sphingolipids activator proteins (coproteins). In terms of biological role, saposin-A and saposin-C stimulate the hydrolysis of glucosylceramide by beta-glucosylceramidase (EC 3.2.1.45) and galactosylceramide by beta-galactosylceramidase (EC 3.2.1.46). Saposin-C apparently acts by combining with the enzyme and acidic lipid to form an activated complex, rather than by solubilizing the substrate. Saposin-B stimulates the hydrolysis of galacto-cerebroside sulfate by arylsulfatase A (EC 3.1.6.8), GM1 gangliosides by beta-galactosidase (EC 3.2.1.23) and globotriaosylceramide by alpha-galactosidase A (EC 3.2.1.22). Saposin-B forms a solubilizing complex with the substrates of the sphingolipid hydrolases. Its function is as follows. Saposin-D is a specific sphingomyelin phosphodiesterase activator (EC 3.1.4.12). The protein is Prosaposin (PSAP) of Gallus gallus (Chicken).